The chain runs to 187 residues: MPKRGLFVGRFQPVHNGHIKALEFVFSQVDEVIIGIGSAQASHTLKNPFTTSERMEMLIRALDEAGLEKRYYLIPLPDINFNAIWSTYVQSMVPRFDVVFTGNSLVAQLFRERGYEVIVQPMFRKDILSATEIRKRMVEGEPWEELVPKSVAEFIKEIKGVERIKMLATNLENSEKELQAPIRIPEF.

This sequence belongs to the archaeal NMN adenylyltransferase family.

It is found in the cytoplasm. It carries out the reaction beta-nicotinamide D-ribonucleotide + ATP + H(+) = diphosphate + NAD(+). The protein operates within cofactor biosynthesis; NAD(+) biosynthesis; NAD(+) from nicotinamide D-ribonucleotide: step 1/1. In Thermococcus onnurineus (strain NA1), this protein is Nicotinamide-nucleotide adenylyltransferase.